Reading from the N-terminus, the 131-residue chain is Peptide methionine sulfoxide reductase MsrB (131 aa).

Residues 8 to 130 (LDTWREELTD…NSLSLKLVPR (123 aa)) form the MsrB domain. Positions 47, 50, 96, and 99 each coordinate Zn(2+). Cys119 functions as the Nucleophile in the catalytic mechanism.

The protein belongs to the MsrB Met sulfoxide reductase family. Zn(2+) is required as a cofactor.

It carries out the reaction L-methionyl-[protein] + [thioredoxin]-disulfide + H2O = L-methionyl-(R)-S-oxide-[protein] + [thioredoxin]-dithiol. The chain is Peptide methionine sulfoxide reductase MsrB from Ectopseudomonas mendocina (strain ymp) (Pseudomonas mendocina).